Reading from the N-terminus, the 92-residue chain is MTTKKAYMYVLECVDKTLYTGYTTDLKKRLATHNAGKGAKYTRYRLPVSLLYYEVFDSKEAAMSAEALFKKRKTRSQKLAYIATHQKEKKNH.

Positions 4-80 (KKAYMYVLEC…KRKTRSQKLA (77 aa)) constitute a GIY-YIG domain.

It belongs to the UPF0213 family.

This chain is UPF0213 protein MGAS9429_Spy1198, found in Streptococcus pyogenes serotype M12 (strain MGAS9429).